The primary structure comprises 320 residues: Sucrose operon repressor (320 aa).

The HTH lacI-type domain occupies 1 to 57 (MVAKLTDVAKLAGVSPTTVSRVINRKGYLSEKTITKVQAAMKTLGYKPNNLARSLQG). Positions 5 to 24 (LTDVAKLAGVSPTTVSRVIN) form a DNA-binding region, H-T-H motif.

Negative regulator of scrB expression. This is Sucrose operon repressor (scrR) from Streptococcus mutans serotype c (strain ATCC 700610 / UA159).